A 364-amino-acid polypeptide reads, in one-letter code: Very-long-chain (3R)-3-hydroxyacyl-CoA dehydratase 3 (364 aa).

At 1–151 the chain is on the cytoplasmic side; the sequence is MAMENQVLTP…ETLTNLRKGY (151 aa). The 90-residue stretch at 7 to 96 folds into the CS domain; it reads VLTPHVYWAQ…KVSQWWERLT (90 aa). Thr-9 carries the post-translational modification Phosphothreonine. Positions 113 to 138 form a coiled coil; sequence LDESDAEMELRAKEEERLNKLRLESE. Residues Ser-116 and Ser-137 each carry the phosphoserine modification. A helical membrane pass occupies residues 152–172; that stretch reads LFMYNLVQFLGFSWIFVNLTV. Residues 173–191 are Lumenal-facing; it reads RFCILGKESFYDTFHTVAD. The helical transmembrane segment at 192–212 threads the bilayer; sequence MMYFCQMLAVVETINAAIGVT. Residues 213 to 214 are Cytoplasmic-facing; the sequence is TS. The chain crosses the membrane as a helical span at residues 215-235; that stretch reads PVLPSLIQLLGRNFILFIIFG. Residues 236–244 are Lumenal-facing; that stretch reads TMEEMQNKA. Residues 245-265 traverse the membrane as a helical segment; the sequence is VVFFVFYLWSAIEIFRYSFYM. Over 266 to 282 the chain is Cytoplasmic; the sequence is LTCIDMDWEVLTWLRYT. A helical transmembrane segment spans residues 283–303; that stretch reads LWIPLYPLGCLAEAVSVVQSI. Catalysis depends on residues Tyr-288 and Glu-295. The Lumenal segment spans residues 304-324; sequence PIFNETGRFSFTLPYPVKIKV. A helical membrane pass occupies residues 325 to 345; it reads RFSFFLQIYLIMIFLGLYINF. Residues 346 to 364 lie on the Cytoplasmic side of the membrane; the sequence is RHLYKQRRRRYGQKKKKIH.

Belongs to the very long-chain fatty acids dehydratase HACD family. May interact with enzymes of the ELO family (including ELOVL1); with those enzymes that mediate condensation, the first of the four steps of the reaction cycle responsible for fatty acids elongation, may be part of a larger fatty acids elongase complex. Interacts with RAC1.

The protein localises to the endoplasmic reticulum membrane. It carries out the reaction a very-long-chain (3R)-3-hydroxyacyl-CoA = a very-long-chain (2E)-enoyl-CoA + H2O. It catalyses the reaction (3R)-hydroxyhexadecanoyl-CoA = (2E)-hexadecenoyl-CoA + H2O. It participates in lipid metabolism; fatty acid biosynthesis. In terms of biological role, catalyzes the third of the four reactions of the long-chain fatty acids elongation cycle. This endoplasmic reticulum-bound enzymatic process, allows the addition of two carbons to the chain of long- and very long-chain fatty acids/VLCFAs per cycle. This enzyme catalyzes the dehydration of the 3-hydroxyacyl-CoA intermediate into trans-2,3-enoyl-CoA, within each cycle of fatty acid elongation. Thereby, it participates in the production of VLCFAs of different chain lengths that are involved in multiple biological processes as precursors of membrane lipids and lipid mediators. Involved in Rac1-signaling pathways leading to the modulation of gene expression. The sequence is that of Very-long-chain (3R)-3-hydroxyacyl-CoA dehydratase 3 from Pongo abelii (Sumatran orangutan).